Reading from the N-terminus, the 288-residue chain is Syntaxin-1A (288 aa).

Topologically, residues 1-265 (MKDRTQELRT…KYQSKARRKK (265 aa)) are cytoplasmic. 3 positions are modified to phosphoserine: Ser14, Ser64, and Ser95. Positions 68-109 (DEKTKEELEELMSDIKKTANKVRSKLKSIEQSIEQEEGLNRS) form a coiled coil. Residue Ser188 is modified to Phosphoserine; by DAPK1. A t-SNARE coiled-coil homology domain is found at 192-254 (LSEIETRHSE…ERAVSDTKKA (63 aa)). Glycyl lysine isopeptide (Lys-Gly) (interchain with G-Cter in SUMO) cross-links involve residues Lys252, Lys253, and Lys256. Residues 266–286 (IMIIICCVILGIVIASTVGGI) traverse the membrane as a helical; Anchor for type IV membrane protein segment. Over 287-288 (FA) the chain is Extracellular.

Belongs to the syntaxin family. Part of the SNARE core complex containing SNAP25, VAMP2 and STX1A; this complex constitutes the basic catalytic machinery of the complex neurotransmitter release apparatus. The SNARE complex interacts with CPLX1. Interacts with STXBP1. The interaction with STXBP1 promotes assembly of the SNARE complex. Interacts (via C-terminus) with KCNB1 (via C-terminus); the interaction increases in a calcium-dependent manner and induces a pore-independent enhancement of exocytosis in neuroendocrine cells, chromaffin cells, pancreatic beta cells and from the soma of dorsal root ganglia (DRG) neurons. Interacts with SYTL4. Interacts with STXBP6. Interacts with PLCL1 (via C2 domain). Interacts with OTOF. Interacts with LGI3. Interacts (via the H3 domain) with SLC6A4 (via the N-terminus); this interaction regulates SLC4A6 channel conductance in thalamocortical neurons. Interacts with SYT6 and SYT8; the interaction is Ca(2+)-dependent. Interacts with VAMP8. Interacts with SNAP23. Interacts with VAPA and SYBU. Interacts with PRRT2. Interacts with SEPT8. Interacts with STXBP5L. Interacts with synaptotagmin-1/SYT1. Interacts with SEPTIN5; in the cerebellar cortex. Interacts with SEPTIN4; in the striatum. Phosphorylated by CK2. Phosphorylation at Ser-188 by DAPK1 significantly decreases its interaction with STXBP1. In terms of processing, sumoylated, sumoylation is required for regulation of synaptic vesicle endocytosis. As to expression, highly expressed in embryonic spinal cord and ganglia and in adult cerebellum and cerebral cortex. Expressed in heart, liver, fat, skeletal muscle, kidney and brain.

It localises to the cytoplasmic vesicle. Its subcellular location is the secretory vesicle. The protein resides in the synaptic vesicle membrane. The protein localises to the synapse. It is found in the synaptosome. It localises to the cell membrane. Its subcellular location is the secreted. Its function is as follows. Plays an essential role in hormone and neurotransmitter calcium-dependent exocytosis and endocytosis. Part of the SNARE (Soluble NSF Attachment Receptor) complex composed of SNAP25, STX1A and VAMP2 which mediates the fusion of synaptic vesicles with the presynaptic plasma membrane. STX1A and SNAP25 are localized on the plasma membrane while VAMP2 resides in synaptic vesicles. The pairing of the three SNAREs from the N-terminal SNARE motifs to the C-terminal anchors leads to the formation of the SNARE complex, which brings membranes into close proximity and results in final fusion. Participates in the calcium-dependent regulation of acrosomal exocytosis in sperm. Also plays an important role in the exocytosis of hormones such as insulin or glucagon-like peptide 1 (GLP-1). The chain is Syntaxin-1A (STX1A) from Homo sapiens (Human).